Consider the following 533-residue polypeptide: Bifunctional purine biosynthesis protein PurH (533 aa).

In terms of domain architecture, MGS-like spans 1 to 148 (MQPNRPIRQA…KNHQDVAIVV (148 aa)).

Belongs to the PurH family.

The catalysed reaction is (6R)-10-formyltetrahydrofolate + 5-amino-1-(5-phospho-beta-D-ribosyl)imidazole-4-carboxamide = 5-formamido-1-(5-phospho-D-ribosyl)imidazole-4-carboxamide + (6S)-5,6,7,8-tetrahydrofolate. It catalyses the reaction IMP + H2O = 5-formamido-1-(5-phospho-D-ribosyl)imidazole-4-carboxamide. Its pathway is purine metabolism; IMP biosynthesis via de novo pathway; 5-formamido-1-(5-phospho-D-ribosyl)imidazole-4-carboxamide from 5-amino-1-(5-phospho-D-ribosyl)imidazole-4-carboxamide (10-formyl THF route): step 1/1. It participates in purine metabolism; IMP biosynthesis via de novo pathway; IMP from 5-formamido-1-(5-phospho-D-ribosyl)imidazole-4-carboxamide: step 1/1. This Pasteurella multocida (strain Pm70) protein is Bifunctional purine biosynthesis protein PurH.